The primary structure comprises 294 residues: Nucleotide-binding protein Reut_A0350 (294 aa).

8-15 provides a ligand contact to ATP; sequence GISGSGKS. GTP is bound at residue 57 to 60; that stretch reads DIRS.

This sequence belongs to the RapZ-like family.

Functionally, displays ATPase and GTPase activities. This chain is Nucleotide-binding protein Reut_A0350, found in Cupriavidus pinatubonensis (strain JMP 134 / LMG 1197) (Cupriavidus necator (strain JMP 134)).